We begin with the raw amino-acid sequence, 144 residues long: Transmembrane protein 170A (144 aa).

Topologically, residues 1–50 are lumenal; that stretch reads MEREGSGGSGGSAGLLQQILSLKVVPRVGNGTLCPNSTSLCSFPEMWYGV. 2 N-linked (GlcNAc...) asparagine glycosylation sites follow: N30 and N36. A helical membrane pass occupies residues 51–71; that stretch reads FLWALVSSLFFHVPAGLLALF. Over 72 to 85 the chain is Cytoplasmic; it reads TLRHHKYGRFMSVS. Residues 86–106 form a helical membrane-spanning segment; sequence ILLMGIVGPITAGILTSAAIA. Residues 107 to 116 are Lumenal-facing; sequence GVYRAAGKEM. A helical transmembrane segment spans residues 117–137; sequence IPFEALTLGTGQTFCVLVVSF. At 138 to 144 the chain is on the cytoplasmic side; it reads LRILATL.

It belongs to the TMEM170 family. In terms of assembly, interacts with RTN4.

It localises to the endoplasmic reticulum membrane. Its subcellular location is the nucleus envelope. In terms of biological role, acts as a regulator of endoplasmic reticulum (ER) and nuclear envelope (NE) morphogenesis. Affects the ratio between tubular ER and ER sheets by promoting sheet formation at the expense of tubules. Influences NE expansion, nuclear pore complex formation and proper localization of inner nuclear membrane proteins. The protein is Transmembrane protein 170A (TMEM170A) of Homo sapiens (Human).